We begin with the raw amino-acid sequence, 81 residues long: Probable antimicrobial peptide Con13 (81 aa).

An N-terminal signal peptide occupies residues 1–22; sequence MNRKLLLVFLVVAMLVMQPAEA. Residues 66–81 constitute a propeptide that is removed on maturation; the sequence is EAGQIPFDEFMDVLYS.

The protein belongs to the non-disulfide-bridged peptide (NDBP) superfamily. Long chain multifunctional peptide (group 2) family. In terms of tissue distribution, expressed by the venom gland.

Its subcellular location is the secreted. The protein resides in the target cell membrane. Its function is as follows. At high concentrations, acts as a pore former in cellular membranes and causes the leakage of the cells. At submicromolar concentrations, degranulates granulocytes and has a weak hemolytic activity against human erythrocytes. Also strongly inhibits the production of superoxide anions. Has a strong antibacterial activity against Gram-negative bacteria but is less active against Gram-positive bacteria. Also has antifungal activity. This Opisthacanthus cayaporum (South American scorpion) protein is Probable antimicrobial peptide Con13.